Here is a 336-residue protein sequence, read N- to C-terminus: Serpentine receptor class gamma-9 (336 aa).

Helical transmembrane passes span 30 to 50 (LLQAAYMVPPAFLYARILYVI), 64 to 84 (FVIYSMDSIVGFILLLLDIFI), 111 to 131 (IYYPLLNYLHCAQPLIQIFLT), 152 to 172 (LSFIVAFVSLSPFLIIWNTII), 200 to 220 (FLFLVRSVAVIITVASTVIMF), 237 to 257 (LCLACVIHSICFMVPSFFEAL), and 271 to 291 (FLIQPFAWDVLNVGSPLIMIF).

The protein belongs to the nematode receptor-like protein srg family.

It localises to the membrane. In Caenorhabditis elegans, this protein is Serpentine receptor class gamma-9 (srg-9).